The chain runs to 329 residues: Proline/serine-rich coiled-coil protein 1 (329 aa).

Position 22 is a phosphoserine (Ser-22). Copy 1 of the repeat occupies 38–41; sequence PEKP. 3 positions are modified to phosphoserine: Ser-47, Ser-65, and Ser-70. 2 consecutive repeat copies span residues 68–71 and 103–106. The segment at 68 to 215 is 5 X 4 AA repeats of P-X-X-P; that stretch reads PLSPEKLEEI…ARTVASPPIP (148 aa). The stretch at 70–94 forms a coiled coil; the sequence is SPEKLEEILDEANRLAAQLEECALK. A disordered region spans residues 94–329; the sequence is KDSENAAAGP…RKAAVPGPTR (236 aa). Over residues 114-126 the composition is skewed to basic and acidic residues; it reads PRRETFVLKDSPV. At Ser-124 the chain carries Phosphoserine. Composition is skewed to polar residues over residues 132-148 and 175-186; these read TVSSWSAPPPSNLTGLR and PTCNLFSASKNP. Thr-145 carries the post-translational modification Phosphothreonine. A Phosphoserine modification is found at Ser-189. Repeat copies occupy residues 194–197 and 212–215. 2 stretches are compositionally biased toward low complexity: residues 219-231 and 302-315; these read APQSSASNSQCSS and GAARGRTSSAARGR.

It belongs to the PSRC1 family. As to quaternary structure, interacts with APC2. Interacts with KIF2A. Interacts with ANKRD53; recruits ANKRD53 to the spindle during mitosis. Phosphorylated during mitosis.

The protein resides in the cytoplasm. Its subcellular location is the cytoskeleton. It is found in the spindle. The protein localises to the spindle pole. Required for normal progression through mitosis. Required for normal congress of chromosomes at the metaphase plate, and for normal rate of chromosomal segregation during anaphase. Plays a role in the regulation of mitotic spindle dynamics. Increases the rate of turnover of microtubules on metaphase spindles, and contributes to the generation of normal tension across sister kinetochores. Recruits KIF2A and ANKRD53 to the mitotic spindle and spindle poles. May participate in p53/TP53-regulated growth suppression. The chain is Proline/serine-rich coiled-coil protein 1 (Psrc1) from Rattus norvegicus (Rat).